The chain runs to 564 residues: Rhodopsin kinase GRK1 (564 aa).

The interaction with RCVRN stretch occupies residues 1–15 (MDFGSLETVVANSAF). The N-terminal stretch occupies residues 1-189 (MDFGSLETVV…LEAQPIGEDW (189 aa)). A Phosphoserine modification is found at serine 5. Threonine 8 bears the Phosphothreonine mark. Serine 21 is modified (phosphoserine; by PKA and autocatalysis). One can recognise an RGS domain in the interval 58-175 (FDNLCSEQPI…LGSLYFLRFL (118 aa)). A Protein kinase domain is found at 190–455 (FLDFRVLGKG…CDALRANVLF (266 aa)). Residues 196–204 (LGKGGFGEV) and lysine 219 each bind ATP. Residue aspartate 317 is the Proton acceptor of the active site. Positions 456–521 (KDISWRQLEA…GNCSIPWQEE (66 aa)) constitute an AGC-kinase C-terminal domain. The tract at residues 456–564 (KDISWRQLEA…TAKSGMCLIS (109 aa)) is C-terminal. Serine 491 carries the phosphoserine; by autocatalysis modification. The residue at position 492 (threonine 492) is a Phosphothreonine; by autocatalysis. The residue at position 561 (cysteine 561) is a Cysteine methyl ester. Residue cysteine 561 is the site of S-farnesyl cysteine attachment. Positions 562-564 (LIS) are cleaved as a propeptide — removed in mature form.

It belongs to the protein kinase superfamily. AGC Ser/Thr protein kinase family. GPRK subfamily. In terms of assembly, interacts (via N-terminus) with RCVRN (via C-terminus); the interaction is Ca(2+)-dependent. Interacts (when prenylated) with PDE6D; this promotes release from membranes. May form a complex composed of RHO, GRK1 and RCVRN in a Ca(2+)-dependent manner; RCVRN prevents the interaction between GRK1 and RHO. In terms of processing, autophosphorylated, Ser-21 is a minor site of autophosphorylation compared to Ser-491 and Thr-492. Phosphorylation at Ser-21 is regulated by light and activated by cAMP. Post-translationally, farnesylation is required for full activity. In terms of tissue distribution, detected in retina (at protein level). Retina-specific. Expressed in rod and cone photoreceptor cells.

It localises to the membrane. Its subcellular location is the cell projection. It is found in the cilium. The protein localises to the photoreceptor outer segment. The catalysed reaction is L-threonyl-[rhodopsin] + ATP = O-phospho-L-threonyl-[rhodopsin] + ADP + H(+). The enzyme catalyses L-seryl-[rhodopsin] + ATP = O-phospho-L-seryl-[rhodopsin] + ADP + H(+). Its activity is regulated as follows. Inhibited by RCVRN, which prevents the interaction between GRK1 and RHO. Inhibition is calcium-dependent. Retina-specific kinase involved in the signal turnoff via phosphorylation of rhodopsin (RHO), the G protein- coupled receptor that initiates the phototransduction cascade. This rapid desensitization is essential for scotopic vision and permits rapid adaptation to changes in illumination. May play a role in the maintenance of the outer nuclear layer in the retina. This Rattus norvegicus (Rat) protein is Rhodopsin kinase GRK1.